Here is a 360-residue protein sequence, read N- to C-terminus: WAT1-related protein At3g28070 (360 aa).

A run of 10 helical transmembrane segments spans residues 15 to 35 (AVFLTAMLVVETSVVGISTLF), 45 to 65 (IYPFLGYSYLLASLLLLPSLF), 84 to 104 (IGLLGFLGSMYVITGYIGIEY), 108 to 128 (TLASAINNITPALTFILAIIF), 140 to 160 (SLAKLMGTILSLIGALVVIFY), 190 to 210 (WLIGGALLTMQGIFVSVSFIL), 224 to 244 (VSFLYTVCVSIVTSTIGLVVE), 248 to 268 (PSVWIIHFDITLITIVTMAIV), 286 to 306 (LYLAIFKPLSILIAVVMGAIF), and 311 to 331 (LYLGCLIGGILITLGFYAVMW). Residues 30–158 (GISTLFKFAT…LSLIGALVVI (129 aa)) form the EamA domain.

This sequence belongs to the drug/metabolite transporter (DMT) superfamily. Plant drug/metabolite exporter (P-DME) (TC 2.A.7.4) family.

The protein localises to the membrane. The protein is WAT1-related protein At3g28070 of Arabidopsis thaliana (Mouse-ear cress).